We begin with the raw amino-acid sequence, 538 residues long: Cytochrome P450 monooxygenase fogE (538 aa).

A helical transmembrane segment spans residues 4-24 (ASSAILLVALIAALWRLSLIG). Cys-437 is a heme binding site.

The protein belongs to the cytochrome P450 family. It depends on heme as a cofactor.

The protein resides in the membrane. The protein operates within secondary metabolite biosynthesis. Cytochrome P450 monooxygenase; part of the gene cluster that mediates the biosynthesis of flavoglaucin and congeners (including aspergin, dihydroauroglaucin and auroglaucin), prenylated salicylaldehyde derivatives carrying a saturated or an unsaturated C-7 side chain. The PKS fogA releases the carboxylic acid (8E,10E,12E)-3,5,7-trihydroxytetradeca-8,10,12-trienoic acid as its product, as well as derivatives with one and two double bonds. FogA is indeed able to reduce the initial triketide, thus being at least partially responsible for the differently saturated heptyl side chains of flavoglaucin congeners. The oxidoreductases fogB, fogC and fogD modify the nascent polyketide in fogA-bound form and, together, fogA, fogB, fogC and fogD are necessary for the formation of the aromatic core and the cyclized PKS products are released as salicyl alcohols. In particular, fogB is responsible for oxidation of a hydroxyl group or reduction of remaining double bond(s) at the C-7 residue whereas fogD is probably involved in the reductive release of the modified PKS products. The cytochrome P450 monooxygenase fogE is then responsible for the hydroxylation at C-3 of the benzene ring. The fogE products are substrates of the prenyltransferase fogH and the prenylated benzyl alcohols are subsequently oxidized by the fogF to produce the final aryl aldehydes flavoglaucin and congeners. The short-chain dehydrogenase fogG does not seem to be involved in the biosynthesis of the prenylated salicylaldehyde derivatives. The protein is Cytochrome P450 monooxygenase fogE of Aspergillus ruber (strain CBS 135680).